A 226-amino-acid polypeptide reads, in one-letter code: Apoptosis regulator OPG045 (226 aa).

Belongs to the orthopoxvirus OPG045 family. Homodimer. Interacts with host pro-apoptotic protein BCL2L11 (via BH3 domain). Interacts with host NLRP1. Interacts with host BAK.

Its subcellular location is the host mitochondrion outer membrane. The protein localises to the host cytoplasm. Its function is as follows. Plays a role in evading host innate immune response by inhibiting host inflammasome activation. Interacts with and inhibits NLR-mediated interleukin-1 beta/IL1B production in infected cells. At the host mitochondria outer membrane, interacts with the BH3 domain of host BAK and prevents BAK from binding active BAX. In turn, host apoptosis is inhibited. This is Apoptosis regulator OPG045 (OPG045) from Vaccinia virus (strain Copenhagen) (VACV).